Reading from the N-terminus, the 445-residue chain is UPF0761 membrane protein Mlg_0521 (445 aa).

Helical transmembrane passes span 56-76 (LLAL…FPVF), 112-132 (GLTV…MAAI), 152-172 (FMVY…SLGI), 195-215 (LLAG…YAAV), 225-245 (ALLG…GFGW), and 259-279 (ALAA…VVLV).

The protein belongs to the UPF0761 family.

It localises to the cell inner membrane. The sequence is that of UPF0761 membrane protein Mlg_0521 from Alkalilimnicola ehrlichii (strain ATCC BAA-1101 / DSM 17681 / MLHE-1).